The primary structure comprises 329 residues: Cardiolipin synthase (CMP-forming) (329 aa).

The N-terminal 34 residues, 1–34 (MPPSVATHASLLLKAAAAAAHLHPKPFFSPRAAP), are a transit peptide targeting the mitochondrion. Residues 27-55 (FFSPRAAPPRIPSAPAPPAAGGSRYRPTT) form a disordered region. Over residues 32-44 (AAPPRIPSAPAPP) the composition is skewed to pro residues. 5 helical membrane passes run 134–154 (LLTLPTVLTIGRVAAVPLLIS), 156–176 (FYMEGPWAATATTGIFLAAAV), 194–214 (FGAFLDPVADKLMVAATLVLL), 228–248 (PWLLTVPAIAIIGREITMSAV), and 298–318 (VTSGIALLYVSAGLAIWSLVV). Residues 319 to 329 (YMRKIWRILLK) are Mitochondrial intermembrane-facing.

Belongs to the CDP-alcohol phosphatidyltransferase class-I family. Requires Mn(2+) as cofactor.

Its subcellular location is the mitochondrion inner membrane. The catalysed reaction is a CDP-1,2-diacyl-sn-glycerol + a 1,2-diacyl-sn-glycero-3-phospho-(1'-sn-glycerol) = a cardiolipin + CMP + H(+). Functionally, catalyzes the synthesis of cardiolipin (CL) (diphosphatidylglycerol) by specifically transferring a phosphatidyl group from CDP-diacylglycerol to phosphatidylglycerol (PG). CL is a key phospholipid in mitochondrial membranes and plays important roles in maintaining the functional integrity and dynamics of mitochondria under both optimal and stress conditions. This is Cardiolipin synthase (CMP-forming) from Oryza sativa subsp. japonica (Rice).